A 174-amino-acid chain; its full sequence is Centrosomal protein 20 (174 aa).

Positions 1–104 are necessary and sufficient for homooligomerization and localization to centrosomes and pericentriolar satellites; the sequence is MATVTELKAV…AFEESKDNSI (104 aa). One can recognise a LisH domain in the interval 49–81; sequence ENLLINELIREYLEFNKYKYTASVLIAESGQPV. The tract at residues 136 to 174 is disordered; it reads TKHLSWKPSRRPDDDHVRKDTGPRTTTEELPAAAQAVSR. S144 bears the Phosphoserine mark. Residues 145–157 are compositionally biased toward basic and acidic residues; it reads RRPDDDHVRKDTG.

The protein belongs to the CEP43 family. As to quaternary structure, homooligomer; probably required for localization to centrosomes. Forms a complex with KIAA0753/OFIP and OFD1; within this complex may stabilize the interaction between OFD1 and KIAA0753/OFIP. Interacts with PCM1; this interaction may be mediated by KIAA0753/OFIP.

It is found in the cytoplasm. It localises to the cytoskeleton. Its subcellular location is the microtubule organizing center. The protein resides in the centrosome. The protein localises to the centriole. It is found in the cell projection. It localises to the cilium. Its subcellular location is the cilium basal body. The protein resides in the cytoplasmic granule. The protein localises to the centriolar satellite. Functionally, involved in the biogenesis of cilia. Required for the recruitment of PLK1 to centrosomes and S phase progression. This is Centrosomal protein 20 from Mus musculus (Mouse).